We begin with the raw amino-acid sequence, 476 residues long: Sulfate adenylyltransferase subunit 1 (476 aa).

The tr-type G domain occupies 24–243 (KSLLRFLTCG…VDVEKEKEAG (220 aa)). Residues 33-40 (GSVDDGKS) are G1. 33-40 (GSVDDGKS) is a GTP binding site. The G2 stretch occupies residues 91-95 (GITID). Positions 112–115 (DTPG) are G3. GTP-binding positions include 112 to 116 (DTPGH) and 167 to 170 (NKMD). The tract at residues 167–170 (NKMD) is G4. Positions 205–207 (SAL) are G5.

Belongs to the TRAFAC class translation factor GTPase superfamily. Classic translation factor GTPase family. CysN/NodQ subfamily. In terms of assembly, heterodimer composed of CysD, the smaller subunit, and CysN.

The enzyme catalyses sulfate + ATP + H(+) = adenosine 5'-phosphosulfate + diphosphate. It participates in sulfur metabolism; hydrogen sulfide biosynthesis; sulfite from sulfate: step 1/3. Its function is as follows. With CysD forms the ATP sulfurylase (ATPS) that catalyzes the adenylation of sulfate producing adenosine 5'-phosphosulfate (APS) and diphosphate, the first enzymatic step in sulfur assimilation pathway. APS synthesis involves the formation of a high-energy phosphoric-sulfuric acid anhydride bond driven by GTP hydrolysis by CysN coupled to ATP hydrolysis by CysD. The polypeptide is Sulfate adenylyltransferase subunit 1 (Vibrio vulnificus (strain YJ016)).